We begin with the raw amino-acid sequence, 252 residues long: NAC domain-containing protein 23 (252 aa).

The 166-residue stretch at 12 to 177 folds into the NAC domain; the sequence is MPPGFRFQPT…EMVLCRISNK (166 aa). Residues 110-183 mediate DNA binding; that stretch reads TAVKRRFVFY…ISNKDLPKPP (74 aa). A disordered region spans residues 225–252; the sequence is VDDAAAADDDPGDLDEEIDDSMQRNHGG. Residues 229–244 show a composition bias toward acidic residues; sequence AAADDDPGDLDEEIDD.

As to quaternary structure, forms heterodimers with NAC26. Expressed in stems and panicles. Expressed in developing seeds.

It localises to the nucleus. It is found in the cytoplasm. In terms of biological role, transcription factor involved in the regulation of seed size. Possesses transactivation activity in yeast. In Oryza sativa subsp. indica (Rice), this protein is NAC domain-containing protein 23.